Consider the following 246-residue polypeptide: UDP-2,3-diacylglucosamine hydrolase (246 aa).

Positions 8, 10, 41, 79, and 114 each coordinate Mn(2+). 79–80 (NR) is a substrate binding site. Asp-122, Ser-160, Asn-164, Lys-167, and His-195 together coordinate substrate. Positions 195 and 197 each coordinate Mn(2+).

This sequence belongs to the LpxH family. It depends on Mn(2+) as a cofactor.

Its subcellular location is the cell inner membrane. It carries out the reaction UDP-2-N,3-O-bis[(3R)-3-hydroxytetradecanoyl]-alpha-D-glucosamine + H2O = 2-N,3-O-bis[(3R)-3-hydroxytetradecanoyl]-alpha-D-glucosaminyl 1-phosphate + UMP + 2 H(+). Its pathway is glycolipid biosynthesis; lipid IV(A) biosynthesis; lipid IV(A) from (3R)-3-hydroxytetradecanoyl-[acyl-carrier-protein] and UDP-N-acetyl-alpha-D-glucosamine: step 4/6. Its function is as follows. Hydrolyzes the pyrophosphate bond of UDP-2,3-diacylglucosamine to yield 2,3-diacylglucosamine 1-phosphate (lipid X) and UMP by catalyzing the attack of water at the alpha-P atom. Involved in the biosynthesis of lipid A, a phosphorylated glycolipid that anchors the lipopolysaccharide to the outer membrane of the cell. The sequence is that of UDP-2,3-diacylglucosamine hydrolase from Chromohalobacter salexigens (strain ATCC BAA-138 / DSM 3043 / CIP 106854 / NCIMB 13768 / 1H11).